The sequence spans 829 residues: Probable beta-glucosidase H (829 aa).

D225 is an active-site residue. In terms of domain architecture, PA14 spans 389-548 (RMLSNAVIRF…DPEQMVRDAV (160 aa)). N416, N431, N473, N602, and N627 each carry an N-linked (GlcNAc...) asparagine glycan.

This sequence belongs to the glycosyl hydrolase 3 family.

The protein localises to the secreted. The catalysed reaction is Hydrolysis of terminal, non-reducing beta-D-glucosyl residues with release of beta-D-glucose.. The protein operates within glycan metabolism; cellulose degradation. In terms of biological role, beta-glucosidases are one of a number of cellulolytic enzymes involved in the degradation of cellulosic biomass. Catalyzes the last step releasing glucose from the inhibitory cellobiose. The sequence is that of Probable beta-glucosidase H (bglH) from Aspergillus clavatus (strain ATCC 1007 / CBS 513.65 / DSM 816 / NCTC 3887 / NRRL 1 / QM 1276 / 107).